Consider the following 92-residue polypeptide: Small ribosomal subunit protein uS19c (92 aa).

This sequence belongs to the universal ribosomal protein uS19 family.

It is found in the plastid. It localises to the chloroplast. Functionally, protein S19 forms a complex with S13 that binds strongly to the 16S ribosomal RNA. The chain is Small ribosomal subunit protein uS19c (rps19) from Glycine max (Soybean).